The sequence spans 364 residues: UDP-N-acetylglucosamine--N-acetylmuramyl-(pentapeptide) pyrophosphoryl-undecaprenol N-acetylglucosamine transferase 1 (364 aa).

Residues 10–12, Asn-124, Ser-195, Ile-250, and Gln-295 contribute to the UDP-N-acetyl-alpha-D-glucosamine site; that span reads TGG.

This sequence belongs to the glycosyltransferase 28 family. MurG subfamily.

The protein localises to the cell membrane. The enzyme catalyses di-trans,octa-cis-undecaprenyl diphospho-N-acetyl-alpha-D-muramoyl-L-alanyl-D-glutamyl-meso-2,6-diaminopimeloyl-D-alanyl-D-alanine + UDP-N-acetyl-alpha-D-glucosamine = di-trans,octa-cis-undecaprenyl diphospho-[N-acetyl-alpha-D-glucosaminyl-(1-&gt;4)]-N-acetyl-alpha-D-muramoyl-L-alanyl-D-glutamyl-meso-2,6-diaminopimeloyl-D-alanyl-D-alanine + UDP + H(+). It functions in the pathway cell wall biogenesis; peptidoglycan biosynthesis. Functionally, cell wall formation. Catalyzes the transfer of a GlcNAc subunit on undecaprenyl-pyrophosphoryl-MurNAc-pentapeptide (lipid intermediate I) to form undecaprenyl-pyrophosphoryl-MurNAc-(pentapeptide)GlcNAc (lipid intermediate II). In Bacillus cereus (strain ATCC 10987 / NRS 248), this protein is UDP-N-acetylglucosamine--N-acetylmuramyl-(pentapeptide) pyrophosphoryl-undecaprenol N-acetylglucosamine transferase 1.